The following is a 750-amino-acid chain: Glycerophosphodiester phosphodiesterase GDPDL7 (750 aa).

A signal peptide spans 1–17; it reads MLRFIIFFSLFIHLCVA. 2 GP-PDE domains span residues 41–339 and 355–654; these read PAVV…SQSI and ALVI…TRYL. Residues Asn134, Asn304, Asn603, and Asn716 are each glycosylated (N-linked (GlcNAc...) asparagine).

Belongs to the glycerophosphoryl diester phosphodiesterase family. In terms of tissue distribution, expressed in flowers and siliques.

The enzyme catalyses a sn-glycero-3-phosphodiester + H2O = an alcohol + sn-glycerol 3-phosphate + H(+). This is Glycerophosphodiester phosphodiesterase GDPDL7 from Arabidopsis thaliana (Mouse-ear cress).